Here is a 361-residue protein sequence, read N- to C-terminus: Outer mitochondrial transmembrane helix translocase (361 aa).

Over 1 to 15 the chain is Mitochondrial intermembrane; it reads MVHAETFSRPLSRNE. Residues 16–32 form a helical membrane-spanning segment; that stretch reads VVGLIFRLTIFGAVTYF. The Cytoplasmic portion of the chain corresponds to 33 to 361; that stretch reads TIKWMVDAID…QNVLTHVCLD (329 aa). Position 133–140 (133–140) interacts with ATP; that stretch reads GPPGCGKT. Position 322 is a phosphoserine (serine 322).

The protein belongs to the AAA ATPase family. MSP1 subfamily. In terms of assembly, interacts with GRIA2 and GRIP1 in an ATP-dependent manner. ATAD1-catalyzed ATP hydrolysis disrupts not only its binding to GRIA2 and GRIP1, but also interaction between GRIP1 and GRIA2, leading to AMPAR complex disassembly.

Its subcellular location is the mitochondrion outer membrane. The protein resides in the peroxisome membrane. It is found in the postsynaptic cell membrane. It catalyses the reaction [protein]-with a C-terminal TM segment(out) + ATP + H2O = [protein]-with a C-terminal TM segment(in) + ADP + phosphate + H(+). Functionally, outer mitochondrial translocase required to remove mislocalized tail-anchored transmembrane proteins on mitochondria. Specifically recognizes and binds tail-anchored transmembrane proteins: acts as a dislocase that mediates the ATP-dependent extraction of mistargeted tail-anchored transmembrane proteins from the mitochondrion outer membrane. Also plays a critical role in regulating the surface expression of AMPA receptors (AMPAR), thereby regulating synaptic plasticity and learning and memory. Required for NMDA-stimulated AMPAR internalization and inhibition of GRIA1 and GRIA2 recycling back to the plasma membrane; these activities are ATPase-dependent. The chain is Outer mitochondrial transmembrane helix translocase from Bos taurus (Bovine).